Here is a 290-residue protein sequence, read N- to C-terminus: tRNA-cytidine(32) 2-sulfurtransferase (290 aa).

The PP-loop motif motif lies at 66–71 (SGGKDS). Residues C141, C144, and C232 each coordinate [4Fe-4S] cluster.

Belongs to the TtcA family. In terms of assembly, homodimer. Mg(2+) serves as cofactor. It depends on [4Fe-4S] cluster as a cofactor.

It is found in the cytoplasm. It catalyses the reaction cytidine(32) in tRNA + S-sulfanyl-L-cysteinyl-[cysteine desulfurase] + AH2 + ATP = 2-thiocytidine(32) in tRNA + L-cysteinyl-[cysteine desulfurase] + A + AMP + diphosphate + H(+). The protein operates within tRNA modification. Catalyzes the ATP-dependent 2-thiolation of cytidine in position 32 of tRNA, to form 2-thiocytidine (s(2)C32). The sulfur atoms are provided by the cysteine/cysteine desulfurase (IscS) system. The protein is tRNA-cytidine(32) 2-sulfurtransferase of Rhizobium etli (strain ATCC 51251 / DSM 11541 / JCM 21823 / NBRC 15573 / CFN 42).